Reading from the N-terminus, the 245-residue chain is MNRCWALFLSLCCYLRLVSAEGDPIPEELYKMLSDHSIRSFDDLQRLLHGDSVDEDRAELDLNSTRSHCGGELESLSRGRRSLGEAAGSPTVAEPAMIAECKTRTEVFEVSRRLIDRTNANFLVWPPCVEVQRCSGCCNNRNVQCRPTQVQLRLVQVRKIEIVRKRPVFKKATVTLEDHLACKCETVVAARPVTRSPGSSQEQRARTPQTRVTIRTVRVRRPPKGKHQKFKHTHDKKALKETLGA.

An N-terminal signal peptide occupies residues 1-20; it reads MNRCWALFLSLCCYLRLVSA. A propeptide spans 21 to 81 (removed in mature form); that stretch reads EGDPIPEELY…ELESLSRGRR (61 aa). Asn63 carries N-linked (GlcNAc...) asparagine glycosylation. Disulfide bonds link Cys101/Cys145, Cys134/Cys182, and Cys138/Cys184. Positions 195-245 are cleaved as a propeptide — removed in mature form; the sequence is RSPGSSQEQRARTPQTRVTIRTVRVRRPPKGKHQKFKHTHDKKALKETLGA. The span at 220–235 shows a compositional bias: basic residues; sequence RRPPKGKHQKFKHTHD. Positions 220 to 245 are disordered; that stretch reads RRPPKGKHQKFKHTHDKKALKETLGA. Residues 236–245 are compositionally biased toward basic and acidic residues; it reads KKALKETLGA.

This sequence belongs to the PDGF/VEGF growth factor family. Antiparallel homodimer; disulfide-linked. Antiparallel heterodimer with PDGFA; disulfide-linked. The PDGFB homodimer interacts with PDGFRA and PDGFRB homodimers, and with heterodimers formed by PDGFRA and PDGFRB. The heterodimer composed of PDGFA and PDGFB interacts with PDGFRB homodimers, and with heterodimers formed by PDGFRA and PDGFRB. Interacts with XLKD1. Interacts with LRP1. Interacts with SORL1 (via the N-terminal ectodomain). Interacts with CD82; this interaction inhibits PDGFB-mediated signaling pathway.

The protein resides in the secreted. Its function is as follows. Growth factor that plays an essential role in the regulation of embryonic development, cell proliferation, cell migration, survival and chemotaxis. Potent mitogen for cells of mesenchymal origin. Required for normal proliferation and recruitment of pericytes and vascular smooth muscle cells in the central nervous system, skin, lung, heart and placenta. Required for normal blood vessel development, and for normal development of kidney glomeruli. Plays an important role in wound healing. Signaling is modulated by the formation of heterodimers with PDGFA. This chain is Platelet-derived growth factor subunit B (PDGFB), found in Felis catus (Cat).